Here is a 227-residue protein sequence, read N- to C-terminus: ATP synthase F(0) complex subunit a (227 aa).

6 helical membrane passes run 12–32 (PTYL…ILFP), 69–89 (WAVL…LGLL), 98–118 (QLSL…IIGM), 132–152 (EGTP…SLFI), 180–200 (FVLM…LFLL), and 202–222 (LLEI…LSLY).

It belongs to the ATPase A chain family. Component of the ATP synthase complex composed at least of ATP5F1A/subunit alpha, ATP5F1B/subunit beta, ATP5MC1/subunit c (homooctomer), MT-ATP6/subunit a, MT-ATP8/subunit 8, ATP5ME/subunit e, ATP5MF/subunit f, ATP5MG/subunit g, ATP5MK/subunit k, ATP5MJ/subunit j, ATP5F1C/subunit gamma, ATP5F1D/subunit delta, ATP5F1E/subunit epsilon, ATP5PF/subunit F6, ATP5PB/subunit b, ATP5PD/subunit d, ATP5PO/subunit OSCP. ATP synthase complex consists of a soluble F(1) head domain (subunits alpha(3) and beta(3)) - the catalytic core - and a membrane F(0) domain - the membrane proton channel (subunits c, a, 8, e, f, g, k and j). These two domains are linked by a central stalk (subunits gamma, delta, and epsilon) rotating inside the F1 region and a stationary peripheral stalk (subunits F6, b, d, and OSCP). Interacts with DNAJC30; interaction is direct.

The protein localises to the mitochondrion inner membrane. The enzyme catalyses H(+)(in) = H(+)(out). In terms of biological role, subunit a, of the mitochondrial membrane ATP synthase complex (F(1)F(0) ATP synthase or Complex V) that produces ATP from ADP in the presence of a proton gradient across the membrane which is generated by electron transport complexes of the respiratory chain. ATP synthase complex consist of a soluble F(1) head domain - the catalytic core - and a membrane F(1) domain - the membrane proton channel. These two domains are linked by a central stalk rotating inside the F(1) region and a stationary peripheral stalk. During catalysis, ATP synthesis in the catalytic domain of F(1) is coupled via a rotary mechanism of the central stalk subunits to proton translocation. With the subunit c (ATP5MC1), forms the proton-conducting channel in the F(0) domain, that contains two crucial half-channels (inlet and outlet) that facilitate proton movement from the mitochondrial intermembrane space (IMS) into the matrix. Protons are taken up via the inlet half-channel and released through the outlet half-channel, following a Grotthuss mechanism. This chain is ATP synthase F(0) complex subunit a, found in Salmo salar (Atlantic salmon).